Reading from the N-terminus, the 247-residue chain is MDRIKCTVAYDGMHFCGYQIQPQHRTVQQEIEKALQKLHKGELVRVQASGRTDSTVHAKGQVIHFDTPLSLEEWQWNNALNTMLPDDIVITQVEKKTEEFHARYGVERKEYRYRVLLSKTADVFRRNYVYQYPYPLEINAIRKAIPYFIGTHDFTSFCSAKTDKKDKVRTIYEIELIEQDDELIFRFVGNGFLYNMVRIIVGTLLSVGQGKLDPDSIPEILAKQNRQFAGKMAPGHGLYLWQVNYNN.

The Nucleophile role is filled by aspartate 53. Residue tyrosine 111 coordinates substrate.

Belongs to the tRNA pseudouridine synthase TruA family. In terms of assembly, homodimer.

The enzyme catalyses uridine(38/39/40) in tRNA = pseudouridine(38/39/40) in tRNA. Its function is as follows. Formation of pseudouridine at positions 38, 39 and 40 in the anticodon stem and loop of transfer RNAs. The polypeptide is tRNA pseudouridine synthase A 1 (Bacillus cereus (strain ATCC 10987 / NRS 248)).